A 249-amino-acid polypeptide reads, in one-letter code: Ribosomal RNA small subunit methyltransferase J (249 aa).

Residues 99 to 100 (RD), 115 to 116 (ER), 151 to 152 (SS), and Asp169 contribute to the S-adenosyl-L-methionine site.

It belongs to the methyltransferase superfamily. RsmJ family.

The protein localises to the cytoplasm. The enzyme catalyses guanosine(1516) in 16S rRNA + S-adenosyl-L-methionine = N(2)-methylguanosine(1516) in 16S rRNA + S-adenosyl-L-homocysteine + H(+). Specifically methylates the guanosine in position 1516 of 16S rRNA. The chain is Ribosomal RNA small subunit methyltransferase J from Shewanella oneidensis (strain ATCC 700550 / JCM 31522 / CIP 106686 / LMG 19005 / NCIMB 14063 / MR-1).